The chain runs to 422 residues: Probable tRNA pseudouridine synthase D (422 aa).

The active-site Nucleophile is D83. In terms of domain architecture, TRUD spans 164–386; it reads GFPNYFGSQR…AGGRRELLIK (223 aa).

This sequence belongs to the pseudouridine synthase TruD family.

It catalyses the reaction uridine(13) in tRNA = pseudouridine(13) in tRNA. Functionally, could be responsible for synthesis of pseudouridine from uracil-13 in transfer RNAs. The protein is Probable tRNA pseudouridine synthase D of Thermococcus sibiricus (strain DSM 12597 / MM 739).